The chain runs to 518 residues: GMP synthase [glutamine-hydrolyzing] (518 aa).

The region spanning 11-203 is the Glutamine amidotransferase type-1 domain; sequence SILVLDFGSQ…AFDVCQAEAN (193 aa). The active-site Nucleophile is cysteine 88. Catalysis depends on residues histidine 177 and glutamate 179. The GMPS ATP-PPase domain maps to 204 to 393; that stretch reads WSMDDFIDMQ…LGMPSDLVWR (190 aa). 231-237 is a binding site for ATP; the sequence is SGGVDSS.

In terms of assembly, homodimer.

It catalyses the reaction XMP + L-glutamine + ATP + H2O = GMP + L-glutamate + AMP + diphosphate + 2 H(+). It functions in the pathway purine metabolism; GMP biosynthesis; GMP from XMP (L-Gln route): step 1/1. Its function is as follows. Catalyzes the synthesis of GMP from XMP. This chain is GMP synthase [glutamine-hydrolyzing], found in Lactiplantibacillus plantarum (strain ATCC BAA-793 / NCIMB 8826 / WCFS1) (Lactobacillus plantarum).